Reading from the N-terminus, the 406-residue chain is Coenzyme A biosynthesis bifunctional protein CoaBC (406 aa).

A phosphopantothenoylcysteine decarboxylase region spans residues 1 to 191 (MLNNRNVLLC…ETSAPLEGKH (191 aa)). The active-site Proton donor is Cys157. A phosphopantothenate--cysteine ligase region spans residues 192 to 406 (VVITAGPTRE…ALSKQTGERS (215 aa)). CTP contacts are provided by Asp281, Lys291, Phe325, Lys339, and Lys343.

In the N-terminal section; belongs to the HFCD (homo-oligomeric flavin containing Cys decarboxylase) superfamily. The protein in the C-terminal section; belongs to the PPC synthetase family. The cofactor is Mg(2+). FMN is required as a cofactor.

It catalyses the reaction N-[(R)-4-phosphopantothenoyl]-L-cysteine + H(+) = (R)-4'-phosphopantetheine + CO2. The catalysed reaction is (R)-4'-phosphopantothenate + L-cysteine + CTP = N-[(R)-4-phosphopantothenoyl]-L-cysteine + CMP + diphosphate + H(+). It functions in the pathway cofactor biosynthesis; coenzyme A biosynthesis; CoA from (R)-pantothenate: step 2/5. Its pathway is cofactor biosynthesis; coenzyme A biosynthesis; CoA from (R)-pantothenate: step 3/5. Catalyzes two sequential steps in the biosynthesis of coenzyme A. In the first step cysteine is conjugated to 4'-phosphopantothenate to form 4-phosphopantothenoylcysteine. In the second step the latter compound is decarboxylated to form 4'-phosphopantotheine. This Bacillus subtilis (strain 168) protein is Coenzyme A biosynthesis bifunctional protein CoaBC.